The primary structure comprises 351 residues: Mediator of RNA polymerase II transcription subunit 18 (351 aa).

Residues 153–231 (GNGDPIDIDT…LPQSLSNGVS (79 aa)) are disordered. Basic and acidic residues predominate over residues 163–204 (NNDKQGDNNTDKPKQEHDGKLPEAIDEDIIKNGDEKKTTHDD). Acidic residues predominate over residues 205–216 (NDSDIMEIDEPN). Residues 217–231 (PETQTLPQSLSNGVS) are compositionally biased toward polar residues.

The protein belongs to the Mediator complex subunit 18 family. As to quaternary structure, component of the Mediator complex.

The protein localises to the nucleus. Its function is as follows. Component of the Mediator complex, a coactivator involved in the regulated transcription of nearly all RNA polymerase II-dependent genes. Mediator functions as a bridge to convey information from gene-specific regulatory proteins to the basal RNA polymerase II transcription machinery. Mediator is recruited to promoters by direct interactions with regulatory proteins and serves as a scaffold for the assembly of a functional preinitiation complex with RNA polymerase II and the general transcription factors. The sequence is that of Mediator of RNA polymerase II transcription subunit 18 (SRB5) from Candida albicans (strain SC5314 / ATCC MYA-2876) (Yeast).